Here is a 246-residue protein sequence, read N- to C-terminus: 1-(5-phosphoribosyl)-5-[(5-phosphoribosylamino)methylideneamino] imidazole-4-carboxamide isomerase (246 aa).

The Proton acceptor role is filled by aspartate 8. Aspartate 130 functions as the Proton donor in the catalytic mechanism.

Belongs to the HisA/HisF family.

It is found in the cytoplasm. The catalysed reaction is 1-(5-phospho-beta-D-ribosyl)-5-[(5-phospho-beta-D-ribosylamino)methylideneamino]imidazole-4-carboxamide = 5-[(5-phospho-1-deoxy-D-ribulos-1-ylimino)methylamino]-1-(5-phospho-beta-D-ribosyl)imidazole-4-carboxamide. Its pathway is amino-acid biosynthesis; L-histidine biosynthesis; L-histidine from 5-phospho-alpha-D-ribose 1-diphosphate: step 4/9. The protein is 1-(5-phosphoribosyl)-5-[(5-phosphoribosylamino)methylideneamino] imidazole-4-carboxamide isomerase of Shigella dysenteriae serotype 1 (strain Sd197).